Reading from the N-terminus, the 505-residue chain is 2,3-bisphosphoglycerate-independent phosphoglycerate mutase (505 aa).

Residues D15 and S65 each contribute to the Mn(2+) site. Residue S65 is the Phosphoserine intermediate of the active site. Substrate-binding positions include H126, 156–157, R187, R193, 260–263, and K333; these read RD and RPDR. Mn(2+) is bound by residues D398, H402, D439, H440, and H457.

It belongs to the BPG-independent phosphoglycerate mutase family. As to quaternary structure, monomer. Mn(2+) is required as a cofactor.

The catalysed reaction is (2R)-2-phosphoglycerate = (2R)-3-phosphoglycerate. It functions in the pathway carbohydrate degradation; glycolysis; pyruvate from D-glyceraldehyde 3-phosphate: step 3/5. Its function is as follows. Catalyzes the interconversion of 2-phosphoglycerate and 3-phosphoglycerate. The protein is 2,3-bisphosphoglycerate-independent phosphoglycerate mutase of Mycoplasmopsis pulmonis (strain UAB CTIP) (Mycoplasma pulmonis).